Here is a 218-residue protein sequence, read N- to C-terminus: Very-long-chain (3R)-3-hydroxyacyl-CoA dehydratase (218 aa).

The Cytoplasmic portion of the chain corresponds to 1–6 (MKTYLS). The chain crosses the membrane as a helical span at residues 7 to 29 (IYYLIQFCGHSWIFTNMTTRFLF). Topologically, residues 30 to 38 (FGQDAFADT) are lumenal. Residues 39–61 (FYSIGLVMQGCQLLSILELAHIL) form a helical membrane-spanning segment. The Cytoplasmic portion of the chain corresponds to 62 to 67 (LGVEQN). Residues 68-87 (GFLPMFLQVAERFIILFVVI) traverse the membrane as a helical segment. Residues 88-96 (TSQEEVQSK) lie on the Lumenal side of the membrane. The chain crosses the membrane as a helical span at residues 97-116 (YIVCALFFIWNLWDVIRYPY). The Cytoplasmic segment spans residues 117–136 (DMLAAVDTDYSALTWLRHTW). Residues 137 to 159 (WIVAYPLSVLAEAYTIYESLPYF) form a helical membrane-spanning segment. Residues Y141 and E148 contribute to the active site. Over 160–178 (ESLGTYSFKMALPVSLSFH) the chain is Lumenal. The chain crosses the membrane as a helical span at residues 179–201 (FPYILTLYLVLQPVGMLYICSCL). Residues 202–218 (WSERKQYFQRKLKLKKN) lie on the Cytoplasmic side of the membrane.

Belongs to the very long-chain fatty acids dehydratase HACD family.

It localises to the endoplasmic reticulum membrane. It catalyses the reaction a very-long-chain (3R)-3-hydroxyacyl-CoA = a very-long-chain (2E)-enoyl-CoA + H2O. The catalysed reaction is (3R)-hydroxyhexadecanoyl-CoA = (2E)-hexadecenoyl-CoA + H2O. The protein operates within lipid metabolism; fatty acid biosynthesis. Catalyzes the third of the four reactions of the long-chain fatty acids elongation cycle. This endoplasmic reticulum-bound enzymatic process, allows the addition of two carbons to the chain of long- and very long-chain fatty acids/VLCFAs per cycle. This enzyme catalyzes the dehydration of the 3-hydroxyacyl-CoA intermediate into trans-2,3-enoyl-CoA, within each cycle of fatty acid elongation. Thereby, it participates in the production of VLCFAs of different chain lengths that are involved in multiple biological processes as precursors of membrane lipids and lipid mediators. This Xenopus laevis (African clawed frog) protein is Very-long-chain (3R)-3-hydroxyacyl-CoA dehydratase.